A 329-amino-acid polypeptide reads, in one-letter code: Isopenicillin N synthase (329 aa).

Residues R87, Y91, S183, and Y189 each contribute to the isopenicillin N site. R87, Y91, S183, Y189, H212, and D214 together coordinate N-[(5S)-5-amino-5-carboxypentanoyl]-L-cysteinyl-D-valine. Positions 180 to 286 (SLSSVSLIRY…RLSLPFFLNG (107 aa)) constitute a Fe2OG dioxygenase domain. Positions 212, 214, and 268 each coordinate Fe(2+). R277 contributes to the 2-oxoglutarate binding site. S279 is an isopenicillin N binding site. S279 contributes to the N-[(5S)-5-amino-5-carboxypentanoyl]-L-cysteinyl-D-valine binding site.

It belongs to the iron/ascorbate-dependent oxidoreductase family. It depends on Fe cation as a cofactor. L-ascorbate is required as a cofactor.

The enzyme catalyses N-[(5S)-5-amino-5-carboxypentanoyl]-L-cysteinyl-D-valine + O2 = isopenicillin N + 2 H2O. Its pathway is antibiotic biosynthesis; penicillin G biosynthesis; penicillin G from L-alpha-aminoadipate and L-cysteine and L-valine: step 2/3. In terms of biological role, removes, in the presence of oxygen, 4 hydrogen atoms from delta-L-(alpha-aminoadipyl)-L-cysteinyl-D-valine (ACV) to form the azetidinone and thiazolidine rings of isopenicillin. This is Isopenicillin N synthase (pcbC) from Streptomyces clavuligerus.